The following is a 231-amino-acid chain: 2-C-methyl-D-erythritol 4-phosphate cytidylyltransferase (231 aa).

It belongs to the IspD/TarI cytidylyltransferase family. IspD subfamily.

It carries out the reaction 2-C-methyl-D-erythritol 4-phosphate + CTP + H(+) = 4-CDP-2-C-methyl-D-erythritol + diphosphate. It functions in the pathway isoprenoid biosynthesis; isopentenyl diphosphate biosynthesis via DXP pathway; isopentenyl diphosphate from 1-deoxy-D-xylulose 5-phosphate: step 2/6. Catalyzes the formation of 4-diphosphocytidyl-2-C-methyl-D-erythritol from CTP and 2-C-methyl-D-erythritol 4-phosphate (MEP). This Xylella fastidiosa (strain 9a5c) protein is 2-C-methyl-D-erythritol 4-phosphate cytidylyltransferase.